A 246-amino-acid polypeptide reads, in one-letter code: DNA polymerase sliding clamp (246 aa).

It belongs to the PCNA family. Homotrimer. The subunits circularize to form a toroid; DNA passes through its center. Replication factor C (RFC) is required to load the toroid on the DNA.

In terms of biological role, sliding clamp subunit that acts as a moving platform for DNA processing. Responsible for tethering the catalytic subunit of DNA polymerase and other proteins to DNA during high-speed replication. The chain is DNA polymerase sliding clamp from Thermoplasma volcanium (strain ATCC 51530 / DSM 4299 / JCM 9571 / NBRC 15438 / GSS1).